Here is a 392-residue protein sequence, read N- to C-terminus: Glutamyl-tRNA reductase (392 aa).

Residues 38-41 (TCNR), Ser86, 91-93 (EDQ), and Gln97 contribute to the substrate site. Cys39 functions as the Nucleophile in the catalytic mechanism. 165-170 (GAGEMA) is an NADP(+) binding site.

It belongs to the glutamyl-tRNA reductase family. In terms of assembly, homodimer.

It catalyses the reaction (S)-4-amino-5-oxopentanoate + tRNA(Glu) + NADP(+) = L-glutamyl-tRNA(Glu) + NADPH + H(+). The protein operates within porphyrin-containing compound metabolism; protoporphyrin-IX biosynthesis; 5-aminolevulinate from L-glutamyl-tRNA(Glu): step 1/2. Its function is as follows. Catalyzes the NADPH-dependent reduction of glutamyl-tRNA(Glu) to glutamate 1-semialdehyde (GSA). The polypeptide is Glutamyl-tRNA reductase (Methanocaldococcus jannaschii (strain ATCC 43067 / DSM 2661 / JAL-1 / JCM 10045 / NBRC 100440) (Methanococcus jannaschii)).